The primary structure comprises 128 residues: MLNKLFGRVVSGKGEGKHYMSLPPYKEKFKNILGFEPYEGTLNVKLGYIINLNELNPIEVDDFYYKNNKYYGVKLIPVRICIKDYCVNGAIVYPKKTEHPNNVIELIAPIKLRKYLSLKNNYMVKIRL.

G12–K17 provides a ligand contact to CDP. Residues T41 and N43 each contribute to the Mg(2+) site. The FMN site is built by T97 and E105. I110–R113 is a CDP binding site.

It belongs to the archaeal riboflavin kinase family. Requires Mg(2+) as cofactor.

It carries out the reaction riboflavin + CTP = CDP + FMN + H(+). Its pathway is cofactor biosynthesis; FMN biosynthesis; FMN from riboflavin (CTP route): step 1/1. In terms of biological role, catalyzes the CTP-dependent phosphorylation of riboflavin (vitamin B2) to form flavin mononucleotide (FMN). In Methanococcus aeolicus (strain ATCC BAA-1280 / DSM 17508 / OCM 812 / Nankai-3), this protein is Riboflavin kinase.